The primary structure comprises 105 residues: Met repressor (105 aa).

The protein belongs to the MetJ family. Homodimer.

Its subcellular location is the cytoplasm. In terms of biological role, this regulatory protein, when combined with SAM (S-adenosylmethionine) represses the expression of the methionine regulon and of enzymes involved in SAM synthesis. The protein is Met repressor of Salmonella dublin (strain CT_02021853).